The chain runs to 434 residues: KH domain-containing protein 3 (434 aa).

The involved in RNA binding stretch occupies residues 1-39 (MATLKTFRTLVQLKHKLGKAYEIVGEPRLPKWFHVEYLE). The KH; atypical domain occupies 40–118 (DPKKMYVEPT…CRMKLMEKEA (79 aa)). Phosphothreonine is present on residues Thr-267 and Thr-279. The required for interaction with NUMA1 and regulation of apoptosis in response to DNA damage stretch occupies residues 334–434 (VREAATQQTP…RAVWEPFVML (101 aa)).

It belongs to the KHDC1 family. As to quaternary structure, component of the subcortical maternal complex (SCMC), at least composed of NLRP5, KHDC3, OOEP, and TLE6. Within the complex, interacts with NLRP5, KHDC3 and TLE6. The SCMC may facilitate translocation of its components between the nuclear and cytoplasmic compartments. Forms a scaffold complex with OOEP/FLOPED, and interacts with BLM and TRIM25 at DNA replication forks. Interacts with PARP1; the interaction is increased following the formation of DNA double-strand breaks. Interacts (via C-terminus) with NUMA1.

It localises to the cytoplasm. The protein localises to the cell cortex. The protein resides in the nucleus. Its subcellular location is the mitochondrion. It is found in the cytoskeleton. It localises to the microtubule organizing center. The protein localises to the centrosome. The protein resides in the chromosome. Functionally, component of the subcortical maternal complex (SCMC), a multiprotein complex that plays a key role in early embryonic development. The SCMC complex is a structural constituent of cytoplasmic lattices, which consist in fibrous structures found in the cytoplasm of oocytes and preimplantation embryos. They are required to store maternal proteins critical for embryonic development, such as proteins that control epigenetic reprogramming of the preimplantation embryo, and prevent their degradation or activation. KHDC3 ensures proper spindle assembly by regulating the localization of AURKA via RHOA signaling and of PLK1 via a RHOA-independent process. Required for the localization of MAD2L1 to kinetochores to enable spindle assembly checkpoint function. As part of the OOEP-KHDC3 scaffold, recruits BLM and TRIM25 to DNA replication forks, thereby promoting the ubiquitination of BLM by TRIM25, enhancing BLM retainment at replication forks and therefore promoting stalled replication fork restart. Regulates homologous recombination-mediated DNA repair via recruitment of RAD51 to sites of DNA double-strand breaks, and sustainment of PARP1 activity, which in turn modulates downstream ATM or ATR activation. Activation of ATM or ATR in response to DNA double-strand breaks may be cell-type specific. Its role in DNA double-strand break repair is independent of its role in restarting stalled replication forks. Promotes neural stem cell neurogenesis and neuronal differentiation in the hippocampus. May regulate normal development of learning, memory and anxiety. Capable of binding RNA. The polypeptide is KH domain-containing protein 3 (Rattus norvegicus (Rat)).